A 477-amino-acid polypeptide reads, in one-letter code: Glycogen synthase (477 aa).

Lys15 serves as a coordination point for ADP-alpha-D-glucose.

It belongs to the glycosyltransferase 1 family. Bacterial/plant glycogen synthase subfamily.

The catalysed reaction is [(1-&gt;4)-alpha-D-glucosyl](n) + ADP-alpha-D-glucose = [(1-&gt;4)-alpha-D-glucosyl](n+1) + ADP + H(+). It functions in the pathway glycan biosynthesis; glycogen biosynthesis. In terms of biological role, synthesizes alpha-1,4-glucan chains using ADP-glucose. The sequence is that of Glycogen synthase from Shigella sonnei (strain Ss046).